The chain runs to 221 residues: Small ribosomal subunit protein uS3 (221 aa).

Residues 39-107 (LRKFLKDKLK…EVFLSIQEVR (69 aa)) enclose the KH type-2 domain.

It belongs to the universal ribosomal protein uS3 family. In terms of assembly, part of the 30S ribosomal subunit. Forms a tight complex with proteins S10 and S14.

Its function is as follows. Binds the lower part of the 30S subunit head. Binds mRNA in the 70S ribosome, positioning it for translation. The sequence is that of Small ribosomal subunit protein uS3 from Bdellovibrio bacteriovorus (strain ATCC 15356 / DSM 50701 / NCIMB 9529 / HD100).